A 230-amino-acid chain; its full sequence is Thymidylate kinase (230 aa).

An ATP-binding site is contributed by Gly-20 to Ser-27.

This sequence belongs to the thymidylate kinase family.

The enzyme catalyses dTMP + ATP = dTDP + ADP. Functionally, phosphorylation of dTMP to form dTDP in both de novo and salvage pathways of dTTP synthesis. The polypeptide is Thymidylate kinase (Rhodopseudomonas palustris (strain TIE-1)).